Consider the following 461-residue polypeptide: GTPase Era, mitochondrial (461 aa).

Residues 1–35 constitute a mitochondrion transit peptide; that stretch reads MAAPWLQRWRGAYAGPSGPLRLVRLHGVQRSSWRA. Residues 39 to 73 form a disordered region; it reads AAGAFGAGPHPGPPQRAANPGPGPHPPPVATSREK. An Era-type G domain is found at 89-354; sequence KVLRISIIGA…QYLLMQAKPG (266 aa). Positions 97–104 are G1; it reads GAPNSGKS. Position 97–104 (97–104) interacts with GTP; the sequence is GAPNSGKS. The G2 stretch occupies residues 123–127; sequence HTTRC. The G3 stretch occupies residues 144–147; the sequence is DTPG. GTP contacts are provided by residues 144–148 and 213–216; these read DTPGL and NKVD. Residues 213 to 216 are G4; the sequence is NKVD. Residues 260 to 319 are disordered; it reads KVTQTPPPENRARESPCQLETDKAQEGSSLDNSSDVKASESSLDTEAREQKPYKYGDQKN. Residues 269–284 are compositionally biased toward basic and acidic residues; it reads NRARESPCQLETDKAQ. Polar residues predominate over residues 285–303; that stretch reads EGSSLDNSSDVKASESSLD. The span at 304-319 shows a compositional bias: basic and acidic residues; it reads TEAREQKPYKYGDQKN. The G5 stretch occupies residues 332-334; that stretch reads LAA. The KH type-2 domain occupies 380–461; sequence ILEYLPLEVP…RLKLKVEVKS (82 aa).

It belongs to the TRAFAC class TrmE-Era-EngA-EngB-Septin-like GTPase superfamily. Era GTPase family.

It is found in the mitochondrion matrix. Its subcellular location is the mitochondrion inner membrane. Probable GTPase that plays a role in the mitochondrial ribosomal small subunit assembly. Specifically binds the 12S mitochondrial rRNA (12S mt-rRNA) to a 33 nucleotide section delineating the 3' terminal stem-loop region. May act as a chaperone that protects the 12S mt-rRNA on the 28S mitoribosomal subunit during ribosomal small subunit assembly. The chain is GTPase Era, mitochondrial (ERAL1) from Gallus gallus (Chicken).